Reading from the N-terminus, the 113-residue chain is MPLPSEVEKAARSGSEYELYKALLLSFGKRGDKAFEYLKRSKVKRYKDFFVVVGKEEYVVEGGFCTCPDFLVNLKGKSPCAHIIAVEVAKITGKYDYIDAYYVDYPDILRKKK.

Residues 49–91 form an SWIM-type zinc finger; that stretch reads FFVVVGKEEYVVEGGFCTCPDFLVNLKGKSPCAHIIAVEVAKI.

This is an uncharacterized protein from Archaeoglobus fulgidus (strain ATCC 49558 / DSM 4304 / JCM 9628 / NBRC 100126 / VC-16).